The primary structure comprises 399 residues: 4-hydroxy-3-methylbut-2-enyl diphosphate reductase (399 aa).

Residue Cys-66 participates in [4Fe-4S] cluster binding. His-96 serves as a coordination point for (2E)-4-hydroxy-3-methylbut-2-enyl diphosphate. Position 96 (His-96) interacts with dimethylallyl diphosphate. His-96 contacts isopentenyl diphosphate. Position 157 (Cys-157) interacts with [4Fe-4S] cluster. His-185 is a (2E)-4-hydroxy-3-methylbut-2-enyl diphosphate binding site. Position 185 (His-185) interacts with dimethylallyl diphosphate. His-185 contacts isopentenyl diphosphate. Catalysis depends on Glu-187, which acts as the Proton donor. Thr-250 is a binding site for (2E)-4-hydroxy-3-methylbut-2-enyl diphosphate. Cys-288 contributes to the [4Fe-4S] cluster binding site. (2E)-4-hydroxy-3-methylbut-2-enyl diphosphate-binding residues include Ser-317, Ser-318, Asn-319, and Ser-380. Residues Ser-317, Ser-318, Asn-319, and Ser-380 each contribute to the dimethylallyl diphosphate site. Ser-317, Ser-318, Asn-319, and Ser-380 together coordinate isopentenyl diphosphate.

Belongs to the IspH family. [4Fe-4S] cluster is required as a cofactor.

It carries out the reaction isopentenyl diphosphate + 2 oxidized [2Fe-2S]-[ferredoxin] + H2O = (2E)-4-hydroxy-3-methylbut-2-enyl diphosphate + 2 reduced [2Fe-2S]-[ferredoxin] + 2 H(+). It catalyses the reaction dimethylallyl diphosphate + 2 oxidized [2Fe-2S]-[ferredoxin] + H2O = (2E)-4-hydroxy-3-methylbut-2-enyl diphosphate + 2 reduced [2Fe-2S]-[ferredoxin] + 2 H(+). Its pathway is isoprenoid biosynthesis; dimethylallyl diphosphate biosynthesis; dimethylallyl diphosphate from (2E)-4-hydroxy-3-methylbutenyl diphosphate: step 1/1. The protein operates within isoprenoid biosynthesis; isopentenyl diphosphate biosynthesis via DXP pathway; isopentenyl diphosphate from 1-deoxy-D-xylulose 5-phosphate: step 6/6. Catalyzes the conversion of 1-hydroxy-2-methyl-2-(E)-butenyl 4-diphosphate (HMBPP) into a mixture of isopentenyl diphosphate (IPP) and dimethylallyl diphosphate (DMAPP). Acts in the terminal step of the DOXP/MEP pathway for isoprenoid precursor biosynthesis. The sequence is that of 4-hydroxy-3-methylbut-2-enyl diphosphate reductase from Synechococcus sp. (strain CC9605).